The primary structure comprises 185 residues: Membrane glycoprotein US10 (185 aa).

An N-terminal signal peptide occupies residues 1 to 24; it reads MLRRGSLRNPLAICLLWWLGVVAA. The Lumenal segment spans residues 25–149; the sequence is ATEETREPTY…VLMNLTYLWY (125 aa). An Ig-like H-type domain is found at 30–133; sequence REPTYFTCGC…YERFVCPVYD (104 aa). Cysteine 39 and cysteine 129 form a disulfide bridge. N-linked (GlcNAc...) asparagine; by host glycosylation is found at asparagine 111 and asparagine 143. Residues 150-170 traverse the membrane as a helical segment; sequence LGDYGAILKIYFGLFCGACVI. Residues 171–185 are Cytoplasmic-facing; it reads TRSLLLICGYYPPRE.

It belongs to the HHV-5 US6 protein family.

The protein localises to the host endoplasmic reticulum membrane. In terms of biological role, plays a role in the modulation of host immune response by down-regulating the surface presentation of HLA-G molecules. Selectively targets HLA-G molecules for degradation by a mechanism distinct from the one used by US11. This chain is Membrane glycoprotein US10 (US10), found in Human cytomegalovirus (strain Merlin) (HHV-5).